A 302-amino-acid polypeptide reads, in one-letter code: Digeranylgeranylglyceryl phosphate synthase (302 aa).

The next 8 membrane-spanning stretches (helical) occupy residues 21-41 (LVVAALTTLIGYGTVASIYGG), 43-63 (IVSSGYAYAALIVVLVAAGGY), 103-123 (IGLIIALVTCPNFIVFGFAVL), 144-164 (IVIAFNSASTIVFGALYASCM), 167-187 (GKVVLPSVALIPVLYAFLLVL), 218-238 (AYMASVAVLGLVVVLSPFPYI), 244-264 (MAYLILALVVDVLIAYSLAIL), and 282-302 (ARSALKLAFMVGALAFLAGLM).

The protein belongs to the UbiA prenyltransferase family. DGGGP synthase subfamily. Mg(2+) is required as a cofactor.

It localises to the cell membrane. The catalysed reaction is sn-3-O-(geranylgeranyl)glycerol 1-phosphate + (2E,6E,10E)-geranylgeranyl diphosphate = 2,3-bis-O-(geranylgeranyl)-sn-glycerol 1-phosphate + diphosphate. The protein operates within membrane lipid metabolism; glycerophospholipid metabolism. In terms of biological role, prenyltransferase that catalyzes the transfer of the geranylgeranyl moiety of geranylgeranyl diphosphate (GGPP) to the C2 hydroxyl of (S)-3-O-geranylgeranylglyceryl phosphate (GGGP). This reaction is the second ether-bond-formation step in the biosynthesis of archaeal membrane lipids. This Hyperthermus butylicus (strain DSM 5456 / JCM 9403 / PLM1-5) protein is Digeranylgeranylglyceryl phosphate synthase.